Consider the following 1228-residue polypeptide: DNA repair protein rad5 (1228 aa).

Disordered regions lie at residues 1 to 96, 194 to 242, 280 to 302, and 445 to 474; these read MDRH…GTLT, PPVR…VLPS, QPPT…PRVS, and KAMD…QELE. Positions 34 to 43 are enriched in low complexity; it reads PSSSPQFSAP. Residues 70–83 are compositionally biased toward acidic residues; that stretch reads HNDDDDDDDDDDDE. Residues 211 to 237 show a composition bias toward polar residues; the sequence is PKKSSTSQARSRSHAQAQPQPQSNTPT. Basic and acidic residues predominate over residues 445 to 454; sequence KAMDKAKAGD. Residues 465–474 show a composition bias toward acidic residues; sequence EEAEEGQELE. Positions 574-784 constitute a Helicase ATP-binding domain; that stretch reads PKQEQHCLGG…FSLVRFLRVE (211 aa). Position 587–594 (587–594) interacts with ATP; sequence DEMGLGKT. The short motif at 735–738 is the DEAH box element; that stretch reads DEAH. Residues 967-1012 form an RING-type zinc finger; that stretch reads CPICAEEPMIDQAVTGCWHSACKKCLLDYIKHQTDRNEVPRCFQCR. In terms of domain architecture, Helicase C-terminal spans 1060 to 1216; sequence ALISHLRTLR…MMSDEEKKMQ (157 aa).

It belongs to the SNF2/RAD54 helicase family.

The protein resides in the cytoplasm. It is found in the nucleus. Functionally, probable helicase, member of the UBC2/RAD6 epistasis group. Functions with DNA repair protein uvs-2/rad18 in error-free postreplication DNA repair. Involved in the maintenance of wild-type rates of instability of simple repetitive sequences such as poly(GT) repeats. Seems to be involved in maintaining a balance which acts in favor of error-prone non-homologous joining during DNA double-strand breaks repairs. The sequence is that of DNA repair protein rad5 (mus-41) from Neurospora crassa (strain ATCC 24698 / 74-OR23-1A / CBS 708.71 / DSM 1257 / FGSC 987).